The sequence spans 904 residues: Essential for maintenance of the cell wall protein 1 (904 aa).

TPR repeat units follow at residues 510-544 (WQLDATLAEKYMSLGILKSAVEIYERLGMACETAL), 563-596 (INENDSDARAYSILGDIKQDPSLWEKSWEIGKYV), 603-636 (AKYYFNPPPKSGAQPNYSATLKHLNDSLRQYPLS), 637-670 (FETWYFYGCVGLQCGKMQIAAEAFTRCVSLDPYH), 671-704 (ALSWSNLSAAYTKMDKLKEAYSCLKRAISCDAQK), and 706-739 (WKIWENYMLVAVKLNEWEDVLTACKQLVSIRRDK).

The protein belongs to the TTC27 family.

The protein localises to the cytoplasm. The protein resides in the nucleus. Required for the maintenance of the cell wall integrity. This chain is Essential for maintenance of the cell wall protein 1 (EMW1), found in Saccharomyces cerevisiae (strain ATCC 204508 / S288c) (Baker's yeast).